The chain runs to 272 residues: uncharacterized protein (272 aa).

4 helical membrane-spanning segments follow: residues Pro9–Val29, Leu38–Pro58, Ala154–Leu174, and Ala188–Ile208. Topologically, residues Ala209 to Ala272 are cytoplasmic.

The protein belongs to the MotA family.

It is found in the cell membrane. In terms of biological role, may be involved in some transport function. This is an uncharacterized protein from Bacillus subtilis (strain 168).